An 886-amino-acid polypeptide reads, in one-letter code: MELRCGGLLFSSRFDSGNLAHVEKVETVSSDGEGVGGVATAPASGSAASPDYEFNVWTRPDCAETEYENGNRSWFYFSVRGGTPGKLIKINIMNMNKQSKLYSQGMAPFVRTLPSRPRWERIRERPTFEMTETQFVLSFVHRFVEGRGATTFFAFCYPFSYSDCQDLLSQLDQRFSENYSTHSSPLDSIYYHRELLCYSLDGLRVDLLTITSCHGLRDDREPRLEQLFPDLGTPRPFRFTGKRIFFLSSRVHPGETPSSFVFNGFLDFILRPDDPRAQTLRRLFVFKLIPMLNPDGVVRGHYRTDSRGVNLNRQYLKPDAVLHPAIYGAKAVLLYHHVHSRLNAKSPTNQQPTLHLPPEAPLSDLEKANNLHNEAHLGQSPDGENPATWPETEPAEEKTDPVWLMPQPIPELEEPAPDTIPPKESGVAYYVDLHGHASKRGCFMYGNSFSDESTQVENMLYPKLISLNSAHFDFQGCNFSEKNMYARDRRDGQSKEGSGRVAIYKASGIIHSYTLECNYNTGRSVNSIPAACHDNGRASPPPPPAFPSRYTVELFEQVGRAMAIAALDMAECNPWPRIVLSEHSSLTNLRAWMLRHVRNSRGLTSAGNMGASKKRGARTPPKSNNSLPVSCSENALSRVRSFSTGTSTGGSSSSQQNSPQMKNSPSFPFHGSRTAGLPGLGSSTQKVSHRVLGPVREPRCSDRRRRQQPLNHRSTTSSLAPSPTLASSGPTSSRNMGSCLLPNSLSLSGSSCSFSSSGDKPEAVMVIGKSLLGAGARIPCIRTRLQARPRLGRSSPPTRRGMRGSSPTSPIPQTRESSELEPGPHSATPGLPQAGPPRPRSAPAFSPISCTLSDSPSRICYSRGLLNQCEVCFVPKSPPLTISPRV.

Residues 157 to 570 (YPFSYSDCQD…AMAIAALDMA (414 aa)) form the Peptidase M14 domain. Zn(2+)-binding residues include H252 and E255. The span at 344 to 353 (AKSPTNQQPT) shows a compositional bias: polar residues. Disordered regions lie at residues 344-363 (AKSP…APLS) and 374-401 (EAHL…KTDP). H434 provides a ligand contact to Zn(2+). E516 serves as the catalytic Proton donor/acceptor. 2 disordered regions span residues 602–737 (GLTS…RNMG) and 783–846 (TRLQ…PAFS). A compositionally biased stretch (polar residues) spans 621–635 (PKSNNSLPVSCSENA). Low complexity predominate over residues 643–654 (STGTSTGGSSSS). The span at 655 to 666 (QQNSPQMKNSPS) shows a compositional bias: polar residues. Low complexity predominate over residues 714–737 (STTSSLAPSPTLASSGPTSSRNMG). Residues 805-815 (SSPTSPIPQTR) are compositionally biased toward polar residues. At S841 the chain carries Phosphoserine.

It belongs to the peptidase M14 family. Zn(2+) is required as a cofactor. As to expression, widely expressed. Highly expressed in testis, and moderately in pituitary, brain, eye and kidney.

The protein resides in the cytoplasm. Its subcellular location is the cytosol. The protein localises to the nucleus. It is found in the cytoskeleton. It localises to the spindle. The protein resides in the midbody. It catalyses the reaction gamma-L-glutamyl-L-glutamyl-[protein] + H2O = L-glutamyl-[protein] + L-glutamate. It carries out the reaction (L-glutamyl)(n+1)-gamma-L-glutamyl-L-glutamyl-[protein] + H2O = (L-glutamyl)(n)-gamma-L-glutamyl-L-glutamyl-[protein] + L-glutamate. The catalysed reaction is C-terminal L-alpha-aminoacyl-L-glutamyl-[tubulin] + H2O = C-terminal L-alpha-aminoacyl-[tubulin] + L-glutamate. The enzyme catalyses C-terminal L-alpha-aminoacyl-L-glutamyl-L-glutamyl-[tubulin] + H2O = C-terminal L-alpha-aminoacyl-L-glutamyl-[tubulin] + L-glutamate. Functionally, metallocarboxypeptidase that mediates deglutamylation of tubulin and non-tubulin target proteins. Catalyzes the removal of polyglutamate side chains present on the gamma-carboxyl group of glutamate residues within the C-terminal tail of alpha- and beta-tubulin. Cleaves alpha- and gamma-linked polyglutamate tubulin side-chain, as well as the branching point glutamate. Also catalyzes the removal of alpha-linked glutamate residues from the carboxy-terminus of alpha-tubulin. Mediates deglutamylation of nucleotidyltransferase CGAS, leading to CGAS antiviral defense response activation. This is Cytosolic carboxypeptidase-like protein 5 from Mus musculus (Mouse).